Reading from the N-terminus, the 425-residue chain is Serine hydroxymethyltransferase (425 aa).

(6S)-5,6,7,8-tetrahydrofolate contacts are provided by residues leucine 123 and glycine 127–leucine 129. Lysine 232 carries the post-translational modification N6-(pyridoxal phosphate)lysine. A (6S)-5,6,7,8-tetrahydrofolate-binding site is contributed by glutamate 248.

Belongs to the SHMT family. As to quaternary structure, homodimer. The cofactor is pyridoxal 5'-phosphate.

It localises to the cytoplasm. It catalyses the reaction (6R)-5,10-methylene-5,6,7,8-tetrahydrofolate + glycine + H2O = (6S)-5,6,7,8-tetrahydrofolate + L-serine. Its pathway is one-carbon metabolism; tetrahydrofolate interconversion. It participates in amino-acid biosynthesis; glycine biosynthesis; glycine from L-serine: step 1/1. Catalyzes the reversible interconversion of serine and glycine with tetrahydrofolate (THF) serving as the one-carbon carrier. This reaction serves as the major source of one-carbon groups required for the biosynthesis of purines, thymidylate, methionine, and other important biomolecules. Also exhibits THF-independent aldolase activity toward beta-hydroxyamino acids, producing glycine and aldehydes, via a retro-aldol mechanism. The polypeptide is Serine hydroxymethyltransferase (Anaplasma phagocytophilum (strain HZ)).